A 287-amino-acid polypeptide reads, in one-letter code: 4-hydroxybenzoate octaprenyltransferase (287 aa).

The next 8 helical transmembrane spans lie at 19–39 (PIGS…AADG), 43–63 (LHVL…GCVI), 94–116 (LALA…PLVI), 135–155 (FFAI…PMGF), 160–180 (GEVP…AVAY), 207–227 (FDVA…GWVG), 234–254 (ALYF…YTLI), and 269–286 (NNWL…DYLI).

This sequence belongs to the UbiA prenyltransferase family. Mg(2+) serves as cofactor.

It localises to the cell inner membrane. The enzyme catalyses all-trans-octaprenyl diphosphate + 4-hydroxybenzoate = 4-hydroxy-3-(all-trans-octaprenyl)benzoate + diphosphate. Its pathway is cofactor biosynthesis; ubiquinone biosynthesis. Its function is as follows. Catalyzes the prenylation of para-hydroxybenzoate (PHB) with an all-trans polyprenyl group. Mediates the second step in the final reaction sequence of ubiquinone-8 (UQ-8) biosynthesis, which is the condensation of the polyisoprenoid side chain with PHB, generating the first membrane-bound Q intermediate 3-octaprenyl-4-hydroxybenzoate. The sequence is that of 4-hydroxybenzoate octaprenyltransferase from Azoarcus sp. (strain BH72).